The chain runs to 584 residues: Arginine--tRNA ligase (584 aa).

The 'HIGH' region signature appears at 129–139; that stretch reads ANPTGPLHVGH.

This sequence belongs to the class-I aminoacyl-tRNA synthetase family. Monomer.

It localises to the cytoplasm. The enzyme catalyses tRNA(Arg) + L-arginine + ATP = L-arginyl-tRNA(Arg) + AMP + diphosphate. The polypeptide is Arginine--tRNA ligase (Halorhodospira halophila (strain DSM 244 / SL1) (Ectothiorhodospira halophila (strain DSM 244 / SL1))).